A 554-amino-acid polypeptide reads, in one-letter code: CTP synthase (554 aa).

An amidoligase domain region spans residues M1–L265. S13 contacts CTP. S13 lines the UTP pocket. ATP-binding positions include S14–I19 and D71. Mg(2+)-binding residues include D71 and E139. CTP-binding positions include D146–E148, K186–Q191, and K222. UTP-binding positions include K186–Q191 and K222. The region spanning N292 to G545 is the Glutamine amidotransferase type-1 domain. G353 is an L-glutamine binding site. The active-site Nucleophile; for glutamine hydrolysis is C380. L-glutamine-binding positions include Y381–Q384, E404, and R471. Active-site residues include H518 and E520.

The protein belongs to the CTP synthase family. Homotetramer.

It catalyses the reaction UTP + L-glutamine + ATP + H2O = CTP + L-glutamate + ADP + phosphate + 2 H(+). The catalysed reaction is L-glutamine + H2O = L-glutamate + NH4(+). It carries out the reaction UTP + NH4(+) + ATP = CTP + ADP + phosphate + 2 H(+). It functions in the pathway pyrimidine metabolism; CTP biosynthesis via de novo pathway; CTP from UDP: step 2/2. With respect to regulation, allosterically activated by GTP, when glutamine is the substrate; GTP has no effect on the reaction when ammonia is the substrate. The allosteric effector GTP functions by stabilizing the protein conformation that binds the tetrahedral intermediate(s) formed during glutamine hydrolysis. Inhibited by the product CTP, via allosteric rather than competitive inhibition. Functionally, catalyzes the ATP-dependent amination of UTP to CTP with either L-glutamine or ammonia as the source of nitrogen. Regulates intracellular CTP levels through interactions with the four ribonucleotide triphosphates. This chain is CTP synthase, found in Xanthomonas euvesicatoria pv. vesicatoria (strain 85-10) (Xanthomonas campestris pv. vesicatoria).